The chain runs to 199 residues: DNA dC-&gt;dU-editing enzyme APOBEC-3A (199 aa).

A CMP/dCMP-type deaminase domain is found at 27–143 (GRHKTYLCYE…PLYKEALQML (117 aa)). His-70 contributes to the Zn(2+) binding site. Catalysis depends on Glu-72, which acts as the Proton donor. The Zn(2+) site is built by Cys-101 and Cys-106.

This sequence belongs to the cytidine and deoxycytidylate deaminase family. In terms of assembly, interacts with AGO2. Interacts with TRIB3 (via N-terminus). It depends on Zn(2+) as a cofactor. In terms of tissue distribution, expressed in peripheral leukocytes with higher expression in CD14-positive phagocytic cells. Highly expressed in keratinocytes and in periphery blood monocytes. Also detected in non-lymphoid tissues including lung and adipose tissues. Found at high levels in colorectal adenocarcinoma, Burkitt's lymphoma and chronic myelogenous leukemia.

Its subcellular location is the nucleus. It is found in the cytoplasm. The enzyme catalyses a 2'-deoxycytidine in single-stranded DNA + H2O + H(+) = a 2'-deoxyuridine in single-stranded DNA + NH4(+). In terms of biological role, DNA deaminase (cytidine deaminase) with restriction activity against viruses, foreign DNA and mobility of retrotransposons. Exhibits antiviral activity against adeno-associated virus (AAV) and human T-cell leukemia virus type 1 (HTLV-1) and may inhibit the mobility of LTR and non-LTR retrotransposons. Selectively targets single-stranded DNA and can deaminate both methylcytosine and cytosine in foreign DNA. Can induce somatic hypermutation in the nuclear and mitochondrial DNA. May also play a role in the epigenetic regulation of gene expression through the process of active DNA demethylation. This is DNA dC-&gt;dU-editing enzyme APOBEC-3A (APOBEC3A) from Homo sapiens (Human).